A 272-amino-acid polypeptide reads, in one-letter code: Putative G-protein coupled receptor GPR32P1 (272 aa).

Residues 1–24 (MNGVSEGTRGCSDRQPGALTQGHS) are disordered. Over 1–46 (MNGVSEGTRGCSDRQPGALTQGHSCSRKMNASRCLSEEVGSLRPLT) the chain is Extracellular. N-linked (GlcNAc...) asparagine glycosylation is present at N30. Residues 47 to 67 (MAVLSASFVVGVLGNGLVPWV) form a helical membrane-spanning segment. At 68-78 (TVFRMARTVST) the chain is on the cytoplasmic side. The chain crosses the membrane as a helical span at residues 79-99 (VCFFHLALADFMLSLSLPILV). The Extracellular segment spans residues 100–116 (YYIVSRQWLLGEWACKL). Residues C114 and C191 are joined by a disulfide bond. The helical transmembrane segment at 117–137 (YTGFVFLTFSTSNCLLVLISV) threads the bilayer. At 138-158 (DRCISVLYPVWALNHRTEQRA) the chain is on the cytoplasmic side. A helical membrane pass occupies residues 159–179 (SWLAFGVWLLAAALCSAHLKF). Residues 180 to 213 (RTTRKWNGCMQCYLQFNLENETAQMWTQEVFGRQ) lie on the Extracellular side of the membrane. N-linked (GlcNAc...) asparagine glycosylation occurs at N199. The helical transmembrane segment at 214–234 (MAVIMAHFLLGFLGPLAIIGT) threads the bilayer. Over 235 to 272 (CAHLIRAKLLREGWVHANRPKRLLLVLVSALSAGSHLT) the chain is Cytoplasmic.

The protein belongs to the G-protein coupled receptor 1 family.

It localises to the cell membrane. Functionally, orphan receptor. The chain is Putative G-protein coupled receptor GPR32P1 (GPR32P1) from Homo sapiens (Human).